The chain runs to 588 residues: Probable G-protein coupled receptor 162 (588 aa).

Over 1-17 the chain is Extracellular; sequence MARGGLGAEEASLRSNA. A helical transmembrane segment spans residues 18–38; the sequence is LSWLACGLLALLANAWIILSI. The Cytoplasmic portion of the chain corresponds to 39–49; sequence SAKQQKHKPLE. Residues 50 to 70 traverse the membrane as a helical segment; that stretch reads LLLCFLAGTHILMAAVPLTTF. At 71-91 the chain is on the extracellular side; the sequence is AVVQLRRQASSDYDWNESICK. Asn-86 is a glycosylation site (N-linked (GlcNAc...) asparagine). A helical membrane pass occupies residues 92 to 112; sequence VFVSTYYTLALATCFTVASLS. Residues 113–133 are Cytoplasmic-facing; that stretch reads YHRMWMVRWPVNYRLSNAKKQ. The chain crosses the membrane as a helical span at residues 134 to 154; sequence ALHAVMGIWMVSFILSTLPSI. Topologically, residues 155-174 are extracellular; the sequence is GWHNNGERYYARGCQFIVSK. The helical transmembrane segment at 175–195 threads the bilayer; that stretch reads IGLGFGVCFSLLLLGGIVMGL. The Cytoplasmic segment spans residues 196–275; the sequence is VCVAITFYQT…SLQVTNLVSA (80 aa). Residues 276-296 traverse the membrane as a helical segment; sequence IVFLYDSLTGVPILVVSFFSL. Residues 297–303 are Extracellular-facing; that stretch reads KSDSAPP. Residues 304 to 324 form a helical membrane-spanning segment; the sequence is WMVLAVLWCSMAQTLLLPSFI. Residues 325–588 lie on the Cytoplasmic side of the membrane; that stretch reads WSCERYRADV…GNPIFPQLTL (264 aa). Ser-413 and Ser-435 each carry phosphoserine. Disordered stretches follow at residues 511-545 and 561-588; these read ETPL…SPDS and SLTG…QLTL. Residues 514 to 525 are compositionally biased toward pro residues; the sequence is LPSPTASPGPSP. The segment covering 530–540 has biased composition (low complexity); sequence PLGFSPRRLSL.

It belongs to the G-protein coupled receptor 1 family.

It localises to the cell membrane. In terms of biological role, orphan receptor. This is Probable G-protein coupled receptor 162 (Gpr162) from Mus musculus (Mouse).